Reading from the N-terminus, the 262-residue chain is LysM and putative peptidoglycan-binding domain-containing protein 3 (262 aa).

Topologically, residues 1-218 (MSGRIPNHGY…PYHGADWSLG (218 aa)) are extracellular. In terms of domain architecture, LysM spans 70–114 (ISRDICEGDTLNSIALQYCCTVADLKRANNFLNEQDFFALRTIKI). The chain crosses the membrane as a helical span at residues 219 to 239 (WWTAVAIMVFVGIITPLFYFL). Residues 240-262 (YYEVLMKVNTSHTLNSIEKSGPS) lie on the Cytoplasmic side of the membrane.

It localises to the cell membrane. The protein resides in the golgi apparatus. In terms of biological role, essential for Golgi structural integrity. In Xenopus tropicalis (Western clawed frog), this protein is LysM and putative peptidoglycan-binding domain-containing protein 3 (lysmd3).